The following is a 278-amino-acid chain: MTFEPSATLRDPFVLYGESFGSRLLLGTARYPSPATLEAAVQASAPAMITVALRRQGAVGDGEGGQAFWQMLKALNVPVLPNTAGCFTAQEVITTAMMAREVFETPWIKLELIGDDYTLQPDTLNLPAVAETLLKEGFKVLPYCTEDLVLCRRLLDVGCQALMPWAAPIGTGRGAVNPHAMRVLRERLPDTPLIVDAGLGLPSHAAQVLEWGYDGVLLNTAVAQAAYPVDMARAFAQAVAAGRTAYLAGPMPEREVAQASTPVVGMPFWHADNTEQRA.

Residue Lys109 is the Schiff-base intermediate with DXP of the active site. 1-deoxy-D-xylulose 5-phosphate-binding positions include Gly170, 197-198 (AG), and 219-220 (NT).

The protein belongs to the ThiG family. Homotetramer. Forms heterodimers with either ThiH or ThiS.

It is found in the cytoplasm. It carries out the reaction [ThiS sulfur-carrier protein]-C-terminal-Gly-aminoethanethioate + 2-iminoacetate + 1-deoxy-D-xylulose 5-phosphate = [ThiS sulfur-carrier protein]-C-terminal Gly-Gly + 2-[(2R,5Z)-2-carboxy-4-methylthiazol-5(2H)-ylidene]ethyl phosphate + 2 H2O + H(+). It participates in cofactor biosynthesis; thiamine diphosphate biosynthesis. Its function is as follows. Catalyzes the rearrangement of 1-deoxy-D-xylulose 5-phosphate (DXP) to produce the thiazole phosphate moiety of thiamine. Sulfur is provided by the thiocarboxylate moiety of the carrier protein ThiS. In vitro, sulfur can be provided by H(2)S. The polypeptide is Thiazole synthase (Cupriavidus taiwanensis (strain DSM 17343 / BCRC 17206 / CCUG 44338 / CIP 107171 / LMG 19424 / R1) (Ralstonia taiwanensis (strain LMG 19424))).